The following is a 281-amino-acid chain: Ornithine lipid ester-linked acyl 2-hydroxylase (281 aa).

The span at methionine 1–glycine 24 shows a compositional bias: polar residues. The tract at residues methionine 1 to alanine 29 is disordered.

The protein belongs to the aspartyl/asparaginyl beta-hydroxylase family.

It carries out the reaction an N(2)-[(3R)-3-(2-saturated-acyloxy)acyl]-L-ornithine lipid + 2-oxoglutarate + O2 = a 2-hydroxyornithine lipid + succinate + CO2. Its pathway is lipid metabolism. Its function is as follows. Involved in the biosynthesis of ornithine lipids (OLs), which are phosphorus-free membrane lipids. Catalyzes the hydroxylation at the 2 position of the secondary fatty acid of OL. Contributes to symbiotic performance and acid tolerance. The chain is Ornithine lipid ester-linked acyl 2-hydroxylase from Rhizobium tropici.